The following is a 401-amino-acid chain: NADH-quinone oxidoreductase subunit D (401 aa).

This sequence belongs to the complex I 49 kDa subunit family. As to quaternary structure, NDH-1 is composed of 15 different subunits. Subunits NuoB, C, D, E, F, and G constitute the peripheral sector of the complex.

Its subcellular location is the cell membrane. It catalyses the reaction a quinone + NADH + 5 H(+)(in) = a quinol + NAD(+) + 4 H(+)(out). In terms of biological role, NDH-1 shuttles electrons from NADH, via FMN and iron-sulfur (Fe-S) centers, to quinones in the respiratory chain. The immediate electron acceptor for the enzyme in this species is believed to be a menaquinone. Couples the redox reaction to proton translocation (for every two electrons transferred, four hydrogen ions are translocated across the cytoplasmic membrane), and thus conserves the redox energy in a proton gradient. The sequence is that of NADH-quinone oxidoreductase subunit D from Deinococcus radiodurans (strain ATCC 13939 / DSM 20539 / JCM 16871 / CCUG 27074 / LMG 4051 / NBRC 15346 / NCIMB 9279 / VKM B-1422 / R1).